The following is a 517-amino-acid chain: MKRLALLSTSDKTGLIDLAKSLVTEFDYEIISSGGTAKTLKDAGIYVTKVSDYTGFPEILGGRVKTLHPRIHGGILARKDLPQDVEELNANNIRPIDLVVVNLYPFEETISKPEVTLAEAIEKIDIGGPAMLRASAKNFAHLTVLCNHFQYNSYLEELRKNAGEVSLEFRQKCALAGFKHTATYDQAIATYLQEQQTTSESEKSEKEIFFLSGKKIKTLRYGENPHQYATWYQRGINASGWGASKIIQGKELSYNNLVDLEAARRIIIEFSDAPTVAILKHTNPCGVAVDETILAAYERAFAGDSVSAFGGIVALNKSIDAATAKAMTKTFLECVVAPGCEPEAEKIFKSKSKLRVLISPYFKQSEPETIKVISGGFLVQDTDDTIDNYSDWKIVTEKQPTTEQIEELMFAWKVVKHVKSNAIVVTKNRATVGIGAGQMNRVGAVKIALEQAGEKAIGGVLASDAFFPFDDSVKTAAAAGVTAIIQPGGSLKDKDSIAAANELGLIMILTGIRHFLH.

The MGS-like domain maps to 1 to 146 (MKRLALLSTS…KNFAHLTVLC (146 aa)).

It belongs to the PurH family.

It carries out the reaction (6R)-10-formyltetrahydrofolate + 5-amino-1-(5-phospho-beta-D-ribosyl)imidazole-4-carboxamide = 5-formamido-1-(5-phospho-D-ribosyl)imidazole-4-carboxamide + (6S)-5,6,7,8-tetrahydrofolate. The enzyme catalyses IMP + H2O = 5-formamido-1-(5-phospho-D-ribosyl)imidazole-4-carboxamide. The protein operates within purine metabolism; IMP biosynthesis via de novo pathway; 5-formamido-1-(5-phospho-D-ribosyl)imidazole-4-carboxamide from 5-amino-1-(5-phospho-D-ribosyl)imidazole-4-carboxamide (10-formyl THF route): step 1/1. It functions in the pathway purine metabolism; IMP biosynthesis via de novo pathway; IMP from 5-formamido-1-(5-phospho-D-ribosyl)imidazole-4-carboxamide: step 1/1. The sequence is that of Bifunctional purine biosynthesis protein PurH from Trichodesmium erythraeum (strain IMS101).